The sequence spans 149 residues: D-aminoacyl-tRNA deacylase (149 aa).

The Gly-cisPro motif, important for rejection of L-amino acids signature appears at 137–138 (GP).

It belongs to the DTD family. In terms of assembly, homodimer.

Its subcellular location is the cytoplasm. It carries out the reaction glycyl-tRNA(Ala) + H2O = tRNA(Ala) + glycine + H(+). The enzyme catalyses a D-aminoacyl-tRNA + H2O = a tRNA + a D-alpha-amino acid + H(+). Its function is as follows. An aminoacyl-tRNA editing enzyme that deacylates mischarged D-aminoacyl-tRNAs. Also deacylates mischarged glycyl-tRNA(Ala), protecting cells against glycine mischarging by AlaRS. Acts via tRNA-based rather than protein-based catalysis; rejects L-amino acids rather than detecting D-amino acids in the active site. By recycling D-aminoacyl-tRNA to D-amino acids and free tRNA molecules, this enzyme counteracts the toxicity associated with the formation of D-aminoacyl-tRNA entities in vivo and helps enforce protein L-homochirality. The sequence is that of D-aminoacyl-tRNA deacylase from Koribacter versatilis (strain Ellin345).